Reading from the N-terminus, the 1300-residue chain is Nephrocystin-3 (1300 aa).

The stretch at 82-183 (KNNEVASMQK…LQRLQAQGIQ (102 aa)) forms a coiled coil. TPR repeat units follow at residues 443-476 (TMED…ICEL), 916-949 (ADLY…RETA), 958-991 (AQSL…SENA), 1000-1033 (AREL…RQKS), 1066-1099 (ARTL…RERV), 1108-1141 (AQSI…RRRA), 1150-1183 (AYTV…RQKS), 1192-1225 (ATAL…YEDS), and 1234-1267 (GETL…KETE). Residues 1268-1288 (TSVLGAKAPSGHSSSGGDTYS) are disordered. Residues 1278–1288 (GHSSSGGDTYS) are compositionally biased toward polar residues.

The protein localises to the cell projection. The protein resides in the cilium. Functionally, required for normal ciliary development and function. Inhibits disheveled-1-induced canonical Wnt-signaling activity and may also play a role in the control of non-canonical Wnt signaling that regulates planar cell polarity. Probably acts as a molecular switch between different Wnt signaling pathways. Required for proper convergent extension cell movements. This chain is Nephrocystin-3 (nphp3), found in Xenopus laevis (African clawed frog).